Reading from the N-terminus, the 89-residue chain is Small ribosomal subunit protein uS15 (89 aa).

Belongs to the universal ribosomal protein uS15 family. Part of the 30S ribosomal subunit. Forms a bridge to the 50S subunit in the 70S ribosome, contacting the 23S rRNA.

In terms of biological role, one of the primary rRNA binding proteins, it binds directly to 16S rRNA where it helps nucleate assembly of the platform of the 30S subunit by binding and bridging several RNA helices of the 16S rRNA. Functionally, forms an intersubunit bridge (bridge B4) with the 23S rRNA of the 50S subunit in the ribosome. The chain is Small ribosomal subunit protein uS15 from Chlorobaculum parvum (strain DSM 263 / NCIMB 8327) (Chlorobium vibrioforme subsp. thiosulfatophilum).